The following is a 511-amino-acid chain: Cytochrome P450 71A6 (511 aa).

2 consecutive transmembrane segments (helical) span residues 1–15 (ILIALLCTLPFLFFL) and 61–77 (VMQLHFGSVPVLVASSP). 3 N-linked (GlcNAc...) asparagine glycosylation sites follow: Asn90, Asn96, and Asn167. Cys450 serves as a coordination point for heme.

This sequence belongs to the cytochrome P450 family. Requires heme as cofactor.

The protein localises to the membrane. The chain is Cytochrome P450 71A6 (CYP71A6) from Nepeta racemosa (Catmint).